A 485-amino-acid polypeptide reads, in one-letter code: Cobyric acid synthase (485 aa).

The GATase cobBQ-type domain occupies 250–448 (TQTVAVIAYP…LHGMFEDPRV (199 aa)). C334 serves as the catalytic Nucleophile. The active site involves H440.

It belongs to the CobB/CobQ family. CobQ subfamily.

The protein operates within cofactor biosynthesis; adenosylcobalamin biosynthesis. In terms of biological role, catalyzes amidations at positions B, D, E, and G on adenosylcobyrinic A,C-diamide. NH(2) groups are provided by glutamine, and one molecule of ATP is hydrogenolyzed for each amidation. This chain is Cobyric acid synthase, found in Polaromonas naphthalenivorans (strain CJ2).